The sequence spans 464 residues: MDAVGYEVFWNETLSQIRSESTEAEFNMWFAHLFFIASFENAIEIAVPSDFFRIQFSQKYQEKLERKFLELSGHPIKLLFAVKKGTPHGNTAPPKHVHTYLEKNSPAEVPSKKSFHPDLNRDYTFENFVSGEETKFSHSAAISVSKNPGTSYNPLLIYGGVGLGKTHLMQAIGHEIYKTTDLNVIYVTAENFGNEFISTLLNKKTQDFKKKYRYTADVLLIDDIHFFENKDGLQEELFYTFNELFEKKKQIIFTCDRPVQELKNLSSRLRSRCSRGLSTDLNMPCFETRCAILIKKIQNYNSTYPHKAIHISDDVVRLVSENISSNIRDLEGALTKIIAFIEVSGSITIDIVPSLLKEFFLSARPKHITVETILHVVADHFNISYSDLKGKKRNKSVVYPRQIAMFLSKELTELSTTELGIEFGGRDHSTVIYGCQKIEGEILTNPSLQANLDLLKSKVQDSIR.

The domain I, interacts with DnaA modulators stretch occupies residues M1–H74. The segment at H74–P117 is domain II. The interval D118–I341 is domain III, AAA+ region. G162, G164, K165, and T166 together coordinate ATP. Positions E342–R464 are domain IV, binds dsDNA.

The protein belongs to the DnaA family. In terms of assembly, oligomerizes as a right-handed, spiral filament on DNA at oriC.

It localises to the cytoplasm. Functionally, plays an essential role in the initiation and regulation of chromosomal replication. ATP-DnaA binds to the origin of replication (oriC) to initiate formation of the DNA replication initiation complex once per cell cycle. Binds the DnaA box (a 9 base pair repeat at the origin) and separates the double-stranded (ds)DNA. Forms a right-handed helical filament on oriC DNA; dsDNA binds to the exterior of the filament while single-stranded (ss)DNA is stabiized in the filament's interior. The ATP-DnaA-oriC complex binds and stabilizes one strand of the AT-rich DNA unwinding element (DUE), permitting loading of DNA polymerase. After initiation quickly degrades to an ADP-DnaA complex that is not apt for DNA replication. Binds acidic phospholipids. The sequence is that of Chromosomal replication initiator protein DnaA from Treponema pallidum (strain Nichols).